Consider the following 464-residue polypeptide: tRNA-2-methylthio-N(6)-dimethylallyladenosine synthase (464 aa).

Positions methionine 1–proline 25 are disordered. The 116-residue stretch at arginine 27 to glycine 142 folds into the MTTase N-terminal domain. [4Fe-4S] cluster is bound by residues cysteine 36, cysteine 72, cysteine 105, cysteine 180, cysteine 184, and cysteine 187. In terms of domain architecture, Radical SAM core spans alanine 166–glutamate 398. In terms of domain architecture, TRAM spans alanine 401–alanine 464.

This sequence belongs to the methylthiotransferase family. MiaB subfamily. As to quaternary structure, monomer. It depends on [4Fe-4S] cluster as a cofactor.

It is found in the cytoplasm. It carries out the reaction N(6)-dimethylallyladenosine(37) in tRNA + (sulfur carrier)-SH + AH2 + 2 S-adenosyl-L-methionine = 2-methylsulfanyl-N(6)-dimethylallyladenosine(37) in tRNA + (sulfur carrier)-H + 5'-deoxyadenosine + L-methionine + A + S-adenosyl-L-homocysteine + 2 H(+). In terms of biological role, catalyzes the methylthiolation of N6-(dimethylallyl)adenosine (i(6)A), leading to the formation of 2-methylthio-N6-(dimethylallyl)adenosine (ms(2)i(6)A) at position 37 in tRNAs that read codons beginning with uridine. This chain is tRNA-2-methylthio-N(6)-dimethylallyladenosine synthase, found in Anaeromyxobacter dehalogenans (strain 2CP-C).